The following is a 582-amino-acid chain: Isopropyl malate synthase AMT7 (582 aa).

Positions 61 to 341 (PVLFSTDLRD…EPGIDLSRLD (281 aa)) constitute a Pyruvate carboxyltransferase domain.

Belongs to the alpha-IPM synthase/homocitrate synthase family. LeuA type 2 subfamily.

The catalysed reaction is 3-methyl-2-oxobutanoate + acetyl-CoA + H2O = (2S)-2-isopropylmalate + CoA + H(+). It participates in mycotoxin biosynthesis. In terms of biological role, isopropyl malate synthase; part of the gene clusters that mediate the biosynthesis of AM-toxins, host-selective toxins (HSTs) causing Alternaria blotch on apple, a worldwide distributed disease. AM-toxins are cyclic depsipeptides containing the 3 residues 2-hydroxy-isovaleric acid (2-HIV), dehydroalanine, L-alanine which are common for all 3 AM-toxins I to III. The fourth precursor is L-alpha-amino-methoxyphenyl-valeric acid (L-Amv) for AM-toxin I, L-alpha-amino-phenyl-valeric acid (L-Apv) for AM-toxin II, and L-alpha-amino-hydroxyphenyl-valeric acid (L-Ahv) for AM-toxin III. AM-toxins have two target sites for affecting susceptible apple cells; they cause invagination of the plasma membrane and electrolyte loss and chloroplast disorganization. The non-ribosomal peptide synthetase AMT1 contains 4 catalytic modules and is responsible for activation of each residue in AM-toxin. The aldo-keto reductase AMT2 catalyzes the conversion of 2-keto-isovaleric acid (2-KIV) to 2-hydroxy-isovaleric acid (2-HIV), one of the precursor residues incorporated by AMT1 during AM-toxin biosynthesis, by reduction of its ketone to an alcohol. The cytochrome P450 monooxygenase AMT3 and the thioesterase AMT4 are also important for AM-toxin production, but their exact function within the AM-toxin biosynthesis are not known yet. Up to 21 proteins (including AMT1 to AMT4) are predicted to be involved in AM-toxin biosynthesis since their expression ishighly up-regulated in AM-toxin-producing cultures. The polypeptide is Isopropyl malate synthase AMT7 (Alternaria alternata (Alternaria rot fungus)).